Reading from the N-terminus, the 229-residue chain is Probable transmembrane reductase CYB561D1 (229 aa).

The Cytoplasmic portion of the chain corresponds to 1–24 (MHSMEVGLVPAPAREPRLTRWLRR). Residues 22–224 (LRRGSGILAH…HQISSSYLPR (203 aa)) form the Cytochrome b561 domain. The chain crosses the membrane as a helical span at residues 25–45 (GSGILAHLIALGFTIFLTVLS). Topologically, residues 46–53 (RPGTSLFS) are lumenal. A helical transmembrane segment spans residues 54-74 (WHPVFMALAFCLCMAEAILLF). Residue His55 coordinates heme b. Topologically, residues 75-91 (SPEHSLFFFCSRKTRIR) are cytoplasmic. The helical transmembrane segment at 92 to 112 (LHWAGQTMAILCAVLGLGFII) threads the bilayer. Heme b contacts are provided by His93 and His127. Over 113–128 (SSKIRSEMSHLVSWHS) the chain is Lumenal. Residues 129 to 149 (WIGALTLLATGGQALCGLCLL) traverse the membrane as a helical segment. Topologically, residues 150-169 (CPRAARVSRVARLKLYHLTC) are cytoplasmic. His166 provides a ligand contact to heme b. The helical transmembrane segment at 170–190 (GLVVYLMATVTVLLGMYSVWF) threads the bilayer. Topologically, residues 191–193 (QAQ) are lumenal. The chain crosses the membrane as a helical span at residues 194–214 (IKGTAWYLCLGLPLYPALVIM). At 215–229 (HQISSSYLPRKKVEI) the chain is on the cytoplasmic side.

Heme b is required as a cofactor.

The protein resides in the membrane. It catalyses the reaction monodehydro-L-ascorbate radical(out) + L-ascorbate(in) = monodehydro-L-ascorbate radical(in) + L-ascorbate(out). The enzyme catalyses Fe(3+)(out) + L-ascorbate(in) = monodehydro-L-ascorbate radical(in) + Fe(2+)(out) + H(+). Its function is as follows. Probable transmembrane reductase that may use ascorbate as an electron donor and transfer electrons across membranes to reduce monodehydro-L-ascorbate radical and iron cations Fe(3+) in another cellular compartment. This Mus musculus (Mouse) protein is Probable transmembrane reductase CYB561D1.